The following is a 177-amino-acid chain: Large ribosomal subunit protein uL6 (177 aa).

The interval 157-177 is disordered; the sequence is YKGKGVRYAGEKVRRKEGKKK.

Belongs to the universal ribosomal protein uL6 family. In terms of assembly, part of the 50S ribosomal subunit.

Its function is as follows. This protein binds to the 23S rRNA, and is important in its secondary structure. It is located near the subunit interface in the base of the L7/L12 stalk, and near the tRNA binding site of the peptidyltransferase center. The polypeptide is Large ribosomal subunit protein uL6 (Caulobacter vibrioides (strain ATCC 19089 / CIP 103742 / CB 15) (Caulobacter crescentus)).